A 638-amino-acid chain; its full sequence is Stress-activated protein kinase alpha (638 aa).

ANK repeat units lie at residues 43–72 (YGQS…TLKA), 80–109 (NGFS…NVDV), 113–146 (DLNT…NVNA), 150–181 (NGET…NVNL), 185–214 (FQES…DVDC), and 219–248 (ERKT…LFDW). An SAM domain is found at 240-303 (KKYKDLFDWL…LKETSNLANE (64 aa)). Residues 351-620 (LEYTEKLGAG…RLVTIENEYR (270 aa)) form the Protein kinase domain. ATP-binding positions include 357–365 (LGAGSSGKV) and lysine 378. Catalysis depends on aspartate 472, which acts as the Proton acceptor.

Belongs to the protein kinase superfamily. TKL Ser/Thr protein kinase family. As to quaternary structure, interacts with F-actin. Post-translationally, autophosphorylated.

It is found in the cytoplasm. It localises to the cytoskeleton. It catalyses the reaction L-seryl-[protein] + ATP = O-phospho-L-seryl-[protein] + ADP + H(+). The enzyme catalyses L-threonyl-[protein] + ATP = O-phospho-L-threonyl-[protein] + ADP + H(+). Its function is as follows. May be involved in cortical F-actin organization and resistance to osmotic stress. Activated upon cell detachment, in vitro. The sequence is that of Stress-activated protein kinase alpha (spkA-1) from Dictyostelium discoideum (Social amoeba).